A 423-amino-acid polypeptide reads, in one-letter code: Immunity-related GTPase family M protein 3 (423 aa).

The IRG-type G domain occupies 83–260; it reads YRVKIAVTGD…PELRNTLQKD (178 aa). Residues 92 to 99, 117 to 121, and 200 to 202 contribute to the GTP site; these read DSGNGMSS, TGVVR, and KLD.

The protein belongs to the TRAFAC class dynamin-like GTPase superfamily. IRG family.

It is found in the endoplasmic reticulum. Its subcellular location is the cytoplasmic vesicle membrane. The protein resides in the lipid droplet. It catalyses the reaction GTP + H2O = GDP + phosphate + H(+). Functionally, immunity-related GTPase that plays important roles in host resistance to acute infection by protozoan, such as Toxoplasma gondii and Leishmania major. Acts as a dynamin-like protein that binds to intracellular membranes and promotes remodeling and trafficking of those membranes. Acts predominantly to restrict acute protozoan infection: expression is required in both hematopoietic and non-hematopoietic cellular compartments and is dependent on Stat1. Only plays a partial role in the control of latent Toxoplasma infection. Involved in the clearance of acute protozoan infections by regulating autophagy, possibly by promoting the fusion of phagosomes with lysosomes for efficient degradation of vacuoles containing parasites. Probably involved in membrane disruption of parasite-containing vacuoles. In addition to its role in resistance to acute infection by protozoan, also acts as a negative regulator of the integrated stress response (ISR) following coxsackievirus B3 infection. Promotes differentiation of activated CD8(+) T-cells. The protein is Immunity-related GTPase family M protein 3 of Mus musculus (Mouse).